The chain runs to 81 residues: Cytoplasmic envelopment protein 3 (81 aa).

Gly2 carries the N-myristoyl glycine; by host lipid modification. A Di-leucine-like internalization motif motif is present at residues 22–23 (LV). The segment at 41–47 (DFDENVT) is asp/Glu-rich (acidic). The segment at 47–81 (TEDADKSTQRRPRVIDVTPKRKPSGKSSHSKCAKC) is disordered. Over residues 66 to 81 (KRKPSGKSSHSKCAKC) the composition is skewed to basic residues.

Belongs to the herpesviridae cytoplasmic envelopment protein 3 family. Interacts with cytoplasmic envelopment protein 2; this interaction is essential for the proper localization of each protein to the assembly complex and thus for the production of infectious virus. Myristoylation and palmitoylation (probably on one or more of the nearby cysteines at the N-terminus) enable membrane-binding and Golgi apparatus-specific targeting and are essential for efficient packaging. Post-translationally, phosphorylated. Phosphorylation does not seem to be required for recycling to the host Golgi apparatus. Packaging is selective for underphosphorylated forms.

The protein resides in the virion tegument. It localises to the virion membrane. It is found in the host cell membrane. Its subcellular location is the host Golgi apparatus membrane. Its function is as follows. Plays an important role in the cytoplasmic envelopment of tegument proteins and capsids during the assembly and egress processes. Also participates in viral entry at the fusion step probably by regulating the core fusion machinery. The polypeptide is Cytoplasmic envelopment protein 3 (Homo sapiens (Human)).